We begin with the raw amino-acid sequence, 277 residues long: Leucine-rich repeat-containing protein 10 (277 aa).

LRR repeat units follow at residues 53 to 74 (ELVK…LGQL), 76 to 97 (NLQI…VCTL), 99 to 120 (QLCI…LSLL), 122 to 143 (NLRT…VCEL), 145 to 167 (LLKT…RRLQ), 168 to 189 (ELRT…LLHM), and 191 to 212 (FLEV…AHLS).

The protein resides in the nucleus. Functionally, may play important roles in cardiac development and/or cardiac function. The chain is Leucine-rich repeat-containing protein 10 (LRRC10) from Homo sapiens (Human).